Consider the following 139-residue polypeptide: Classical arabinogalactan protein 3 (139 aa).

The first 21 residues, 1–21 (MALKTLQALIFLGLFAASCLA), serve as a signal peptide directing secretion. A Pyrrolidone carboxylic acid modification is found at glutamine 22. The interval 30–115 (TFLPPVESPS…PAPRADGPVA (86 aa)) is disordered. Composition is skewed to pro residues over residues 46–77 (AEPP…PPTT) and 97–107 (PSGPTPAPAPA). A lipid anchor (GPI-anchor amidated aspartate) is attached at aspartate 116. Residues 117-139 (SALTNKAFLVSTVIAGALYAVLA) constitute a propeptide, removed in mature form.

This sequence belongs to the classical AGP family. In terms of processing, O-glycosylated on the hydroxyproline residues. Expressed at a low level in roots.

It localises to the cell membrane. Functionally, proteoglycan that seems to be implicated in diverse developmental roles such as differentiation, cell-cell recognition, embryogenesis and programmed cell death. This is Classical arabinogalactan protein 3 (AGP3) from Arabidopsis thaliana (Mouse-ear cress).